The sequence spans 549 residues: Glucose-6-phosphate isomerase (549 aa).

The active-site Proton donor is E353. Catalysis depends on residues H384 and K512.

Belongs to the GPI family.

Its subcellular location is the cytoplasm. It carries out the reaction alpha-D-glucose 6-phosphate = beta-D-fructose 6-phosphate. Its pathway is carbohydrate biosynthesis; gluconeogenesis. It participates in carbohydrate degradation; glycolysis; D-glyceraldehyde 3-phosphate and glycerone phosphate from D-glucose: step 2/4. Catalyzes the reversible isomerization of glucose-6-phosphate to fructose-6-phosphate. This chain is Glucose-6-phosphate isomerase, found in Alteromonas mediterranea (strain DSM 17117 / CIP 110805 / LMG 28347 / Deep ecotype).